Consider the following 289-residue polypeptide: Xyloglucan endotransglucosylase/hydrolase protein 15 (289 aa).

Positions 1–25 are cleaved as a signal peptide; the sequence is MGPSSSLTTIVATVLLVTLFGSAYA. The GH16 domain occupies 26–216; sequence SNFFDEFDLT…WSKAPFTAYY (191 aa). E102 (nucleophile) is an active-site residue. The active-site Proton donor is the E106. E106 is a xyloglucan binding site. N-linked (GlcNAc...) asparagine glycosylation is present at N110. Xyloglucan is bound by residues 119-121, 129-131, 195-196, and G200; these read HTN, DRE, and DW. 2 disulfides stabilise this stretch: C224–C230 and C270–C284. Position 275 (R275) interacts with xyloglucan.

Belongs to the glycosyl hydrolase 16 family. XTH group 2 subfamily. Contains at least one intrachain disulfide bond essential for its enzymatic activity. As to expression, strongly expressed in roots, hypocotyls and cotyledons. Aslo detected in inflorescence stems and in the carpels and styles in flowers.

It localises to the secreted. The protein localises to the cell wall. The protein resides in the extracellular space. Its subcellular location is the apoplast. The catalysed reaction is breaks a beta-(1-&gt;4) bond in the backbone of a xyloglucan and transfers the xyloglucanyl segment on to O-4 of the non-reducing terminal glucose residue of an acceptor, which can be a xyloglucan or an oligosaccharide of xyloglucan.. It catalyses the reaction xyloglucan + H2O = xyloglucan oligosaccharides.. Functionally, catalyzes xyloglucan endohydrolysis (XEH) and/or endotransglycosylation (XET). Cleaves and religates xyloglucan polymers, an essential constituent of the primary cell wall, and thereby participates in cell wall construction of growing tissues. Has a high XET activity, but little or no XEH activity in vitro. Acceptor preferences are XXXGol &gt; XLLGol = XLFGol &gt; XXLGol &gt; XXFGol. The sequence is that of Xyloglucan endotransglucosylase/hydrolase protein 15 from Arabidopsis thaliana (Mouse-ear cress).